Here is a 592-residue protein sequence, read N- to C-terminus: A-type ATP synthase subunit A (592 aa).

233 to 240 (GPFGSGKT) contacts ATP.

Belongs to the ATPase alpha/beta chains family. In terms of assembly, has multiple subunits with at least A(3), B(3), C, D, E, F, H, I and proteolipid K(x).

The protein resides in the cell membrane. It catalyses the reaction ATP + H2O + 4 H(+)(in) = ADP + phosphate + 5 H(+)(out). Its function is as follows. Component of the A-type ATP synthase that produces ATP from ADP in the presence of a proton gradient across the membrane. The A chain is the catalytic subunit. The sequence is that of A-type ATP synthase subunit A from Saccharolobus islandicus (strain L.S.2.15 / Lassen #1) (Sulfolobus islandicus).